Consider the following 709-residue polypeptide: Anillin-like protein 3 (709 aa).

A PH domain is found at 584-705 (DMEYRGFLHI…WLSAINDTLD (122 aa)).

The polypeptide is Anillin-like protein 3 (ani-3) (Caenorhabditis elegans).